A 126-amino-acid polypeptide reads, in one-letter code: Large ribosomal subunit protein bL12 (126 aa).

The protein belongs to the bacterial ribosomal protein bL12 family. Homodimer. Part of the ribosomal stalk of the 50S ribosomal subunit. Forms a multimeric L10(L12)X complex, where L10 forms an elongated spine to which 2 to 4 L12 dimers bind in a sequential fashion. Binds GTP-bound translation factors.

Forms part of the ribosomal stalk which helps the ribosome interact with GTP-bound translation factors. Is thus essential for accurate translation. This chain is Large ribosomal subunit protein bL12, found in Chlorobaculum tepidum (strain ATCC 49652 / DSM 12025 / NBRC 103806 / TLS) (Chlorobium tepidum).